A 188-amino-acid polypeptide reads, in one-letter code: Ion-translocating oxidoreductase complex subunit B (188 aa).

Positions 1-26 are hydrophobic; that stretch reads MNGVFLAIGALLPICLAGGALLGYAA. Residues 32-90 form the 4Fe-4S domain; it reads QGDPVAEQVNALLPQTQCGQCGYPGCKPYAEAIAAGDKINKCPPGGEATIRALADLLDL. Residues cysteine 49, cysteine 52, cysteine 57, cysteine 73, cysteine 113, cysteine 116, cysteine 119, cysteine 123, cysteine 143, cysteine 146, cysteine 149, and cysteine 153 each coordinate [4Fe-4S] cluster. 2 consecutive 4Fe-4S ferredoxin-type domains span residues 104 to 133 and 134 to 163; these read RVAY…GAAR and LMHT…MREI.

It belongs to the 4Fe4S bacterial-type ferredoxin family. RnfB subfamily. The complex is composed of six subunits: RnfA, RnfB, RnfC, RnfD, RnfE and RnfG. The cofactor is [4Fe-4S] cluster.

It localises to the cell inner membrane. Part of a membrane-bound complex that couples electron transfer with translocation of ions across the membrane. This Pseudomonas aeruginosa (strain LESB58) protein is Ion-translocating oxidoreductase complex subunit B.